The primary structure comprises 169 residues: Small ribosomal subunit protein uS5 (169 aa).

An S5 DRBM domain is found at 15–79 (LKEQVVAINR…EAAKKNLRRI (65 aa)).

The protein belongs to the universal ribosomal protein uS5 family. Part of the 30S ribosomal subunit. Contacts proteins S4 and S8.

Its function is as follows. With S4 and S12 plays an important role in translational accuracy. In terms of biological role, located at the back of the 30S subunit body where it stabilizes the conformation of the head with respect to the body. The polypeptide is Small ribosomal subunit protein uS5 (Solibacter usitatus (strain Ellin6076)).